The chain runs to 201 residues: FMN-dependent NADH:quinone oxidoreductase (201 aa).

Residues serine 10, 16 to 18, 96 to 99, and 140 to 143 contribute to the FMN site; these read SQS, MYNF, and SRGG.

Belongs to the azoreductase type 1 family. Homodimer. FMN is required as a cofactor.

It carries out the reaction 2 a quinone + NADH + H(+) = 2 a 1,4-benzosemiquinone + NAD(+). The catalysed reaction is N,N-dimethyl-1,4-phenylenediamine + anthranilate + 2 NAD(+) = 2-(4-dimethylaminophenyl)diazenylbenzoate + 2 NADH + 2 H(+). In terms of biological role, quinone reductase that provides resistance to thiol-specific stress caused by electrophilic quinones. Also exhibits azoreductase activity. Catalyzes the reductive cleavage of the azo bond in aromatic azo compounds to the corresponding amines. In Pectobacterium atrosepticum (strain SCRI 1043 / ATCC BAA-672) (Erwinia carotovora subsp. atroseptica), this protein is FMN-dependent NADH:quinone oxidoreductase.